Reading from the N-terminus, the 294-residue chain is Pyridoxal 5'-phosphate synthase subunit PdxS (294 aa).

Residue Asp-24 participates in D-ribose 5-phosphate binding. Lys-81 (schiff-base intermediate with D-ribose 5-phosphate) is an active-site residue. Gly-153 is a D-ribose 5-phosphate binding site. Residue Arg-165 coordinates D-glyceraldehyde 3-phosphate. Residues Gly-214 and 235–236 (GS) contribute to the D-ribose 5-phosphate site.

The protein belongs to the PdxS/SNZ family. In terms of assembly, in the presence of PdxT, forms a dodecamer of heterodimers.

It catalyses the reaction aldehydo-D-ribose 5-phosphate + D-glyceraldehyde 3-phosphate + L-glutamine = pyridoxal 5'-phosphate + L-glutamate + phosphate + 3 H2O + H(+). Its pathway is cofactor biosynthesis; pyridoxal 5'-phosphate biosynthesis. In terms of biological role, catalyzes the formation of pyridoxal 5'-phosphate from ribose 5-phosphate (RBP), glyceraldehyde 3-phosphate (G3P) and ammonia. The ammonia is provided by the PdxT subunit. Can also use ribulose 5-phosphate and dihydroxyacetone phosphate as substrates, resulting from enzyme-catalyzed isomerization of RBP and G3P, respectively. The protein is Pyridoxal 5'-phosphate synthase subunit PdxS of Bacillus pumilus (strain SAFR-032).